The primary structure comprises 88 residues: Small ribosomal subunit protein uS15 (88 aa).

Belongs to the universal ribosomal protein uS15 family. As to quaternary structure, part of the 30S ribosomal subunit. Forms a bridge to the 50S subunit in the 70S ribosome, contacting the 23S rRNA.

One of the primary rRNA binding proteins, it binds directly to 16S rRNA where it helps nucleate assembly of the platform of the 30S subunit by binding and bridging several RNA helices of the 16S rRNA. Functionally, forms an intersubunit bridge (bridge B4) with the 23S rRNA of the 50S subunit in the ribosome. This Mycoplasma capricolum subsp. capricolum (strain California kid / ATCC 27343 / NCTC 10154) protein is Small ribosomal subunit protein uS15.